The following is a 305-amino-acid chain: Ribonuclease BN (305 aa).

7 residues coordinate Zn(2+): histidine 64, histidine 66, aspartate 68, histidine 69, histidine 141, aspartate 212, and histidine 270. Residue aspartate 68 is the Proton acceptor of the active site.

It belongs to the RNase Z family. RNase BN subfamily. Homodimer. Zn(2+) is required as a cofactor.

Zinc phosphodiesterase, which has both exoribonuclease and endoribonuclease activities. This Escherichia coli O127:H6 (strain E2348/69 / EPEC) protein is Ribonuclease BN.